The sequence spans 308 residues: Uridine diphosphate glucose pyrophosphatase NUDT22 (308 aa).

Residues Phe-56, Tyr-86, Arg-138, Ala-143, Asp-150, His-155, and Glu-157 each contribute to the substrate site. The region spanning 117–284 is the Nudix hydrolase domain; the sequence is ADPLGVGAAL…KGAILLYNRH (168 aa). Positions 174–195 match the Nudix box motif; the sequence is GLLVVRELFSSVLQEICDEVNL. Mg(2+) contacts are provided by Glu-188 and Glu-192. A substrate-binding site is contributed by Ser-273.

Belongs to the Nudix hydrolase family. The cofactor is Mg(2+).

It catalyses the reaction UDP-sugar + H2O = UMP + alpha-D-aldose 1-phosphate.. Hydrolyzes UDP-glucose to glucose 1-phosphate and UMP and UDP-galactose to galactose 1-phosphate and UMP. Preferred substrate is UDP-glucose. The sequence is that of Uridine diphosphate glucose pyrophosphatase NUDT22 (Nudt22) from Mus musculus (Mouse).